The following is a 279-amino-acid chain: MSFQDLEAGTRSPAPNRFTGGRQQRPSSRGDPSQEVAAGIFRISTAVNSFFRLVNSIGTPKDTLELRDKLQKTRLQISELVKNTSAKLKEASEADLHGSASQIKKIADAKLAKDFQSVLKEFQKAQRLAAEREITYTPVVTKEIPTSYNAPELDTESLRISQQQALLLQSRRQEVVFLDNEITFNEAIIEEREQGIREIEDQIRDVNGMFKDLALMVNHQGNIVDDISSNLDNSHAATTQATVQLRKAAKTQRSNSSLTCLLILIFGIVLLIVIIVVLV.

A disordered region spans residues 1-34 (MSFQDLEAGTRSPAPNRFTGGRQQRPSSRGDPSQ). Serine 2 is modified (N-acetylserine). Residues 2-258 (SFQDLEAGTR…AKTQRSNSSL (257 aa)) lie on the Cytoplasmic side of the membrane. The segment covering 21–31 (GRQQRPSSRGD) has biased composition (polar residues). The stretch at 65–94 (ELRDKLQKTRLQISELVKNTSAKLKEASEA) forms a coiled coil. The 63-residue stretch at 186 to 248 (EAIIEEREQG…TQATVQLRKA (63 aa)) folds into the t-SNARE coiled-coil homology domain. A helical; Anchor for type IV membrane protein membrane pass occupies residues 259-279 (TCLLILIFGIVLLIVIIVVLV).

Belongs to the syntaxin family. In terms of assembly, interacts with VTI11 and SYP51 to form a t-SNARE complex and with alpha-SNAP to form a 20S complex. In terms of tissue distribution, a high level expression is seen in the roots while a low level expression is seen in the leaves.

It is found in the prevacuolar compartment membrane. May function in the docking or fusion of transport vesicles with the prevacuolar membrane. This Arabidopsis thaliana (Mouse-ear cress) protein is Syntaxin-21 (SYP21).